The chain runs to 2144 residues: Cadherin EGF LAG seven-pass G-type receptor 2 (2144 aa).

Cadherin domains lie at 1–40 (EDQV…APQF), 41–146 (LRDS…PPVF), 147–248 (EQDE…PPVL), and 253–371 (ILFN…SPLL). Residues 1–1605 (EDQVSYTLAI…GEILPLKTLT (1605 aa)) lie on the Extracellular side of the membrane. N-linked (GlcNAc...) asparagine glycans are attached at residues asparagine 261, asparagine 301, asparagine 407, and asparagine 437. The EGF-like 1; calcium-binding domain maps to 453 to 511 (DDNICLREPCENYMRCVSVLRFDSSAPFIASSSVLFRPIHPVGGLRCRCPPGFTGDYCE). 9 disulfide bridges follow: cysteine 457-cysteine 468, cysteine 462-cysteine 499, cysteine 501-cysteine 510, cysteine 517-cysteine 528, cysteine 522-cysteine 537, cysteine 539-cysteine 548, cysteine 557-cysteine 568, cysteine 562-cysteine 578, and cysteine 580-cysteine 590. In terms of domain architecture, EGF-like 2; calcium-binding spans 513 to 549 (EVDLCYSRPCGPHGHCRSREGGYTCLCRDGYTGEHCE). Residues 553–591 (RSGRCTPGVCKNGGTCVNLLVGGFKCDCPSGDFEKPFCQ) form the EGF-like 3; calcium-binding domain. The Laminin G-like 1 domain maps to 592–796 (VTTRSFPARS…IANNGTVPGC (205 aa)). 2 N-linked (GlcNAc...) asparagine glycosylation sites follow: asparagine 726 and asparagine 790. Disulfide bonds link cysteine 770–cysteine 796, cysteine 803–cysteine 814, cysteine 808–cysteine 823, and cysteine 825–cysteine 834. Positions 799 to 835 (KKNVCDSNTCHNGGTCVNQWDAFSCECPLGFGGKSCA) constitute an EGF-like 4; calcium-binding domain. Asparagine 816 is modified ((3R)-3-hydroxyasparagine). Residues 839–1016 (ANPQRFLGSS…GESINVEPGC (178 aa)) form the Laminin G-like 2 domain. The N-linked (GlcNAc...) asparagine glycan is linked to asparagine 966. Cystine bridges form between cysteine 986-cysteine 1016, cysteine 1022-cysteine 1033, cysteine 1027-cysteine 1042, cysteine 1044-cysteine 1053, cysteine 1057-cysteine 1068, cysteine 1062-cysteine 1080, cysteine 1082-cysteine 1091, cysteine 1112-cysteine 1124, cysteine 1114-cysteine 1131, cysteine 1133-cysteine 1146, cysteine 1149-cysteine 1161, cysteine 1151-cysteine 1168, cysteine 1170-cysteine 1179, and cysteine 1182-cysteine 1194. An EGF-like 5; calcium-binding domain is found at 1018 to 1053 (WPDPCDSNPCPTNSYCSNDWDSYSCSCDPGYYGDNC). (3R)-3-hydroxyasparagine is present on asparagine 1035. Asparagine 1052 is a glycosylation site (N-linked (GlcNAc...) asparagine). The 39-residue stretch at 1054 to 1092 (TNVCDLNPCEHQSACTRKPSAPHGYICECLPNYLGPYCE) folds into the EGF-like 6; calcium-binding domain. Positions 1108–1147 (TCGPCNCDVSKGFDPDCNKTSGECHCKENHYRPPSSPTCL) constitute an EGF-like 7; calcium-binding domain. The N-linked (GlcNAc...) asparagine glycan is linked to asparagine 1125. The Laminin EGF-like domain maps to 1149 to 1196 (CDCYPTGSLSRVCDPEDGQCPCKPGVIGRQCDRCDNPFAEVTTNGCEV). 3 N-linked (GlcNAc...) asparagine glycosylation sites follow: asparagine 1249, asparagine 1268, and asparagine 1286. One can recognise a GAIN-B domain in the interval 1424-1594 (ETTVILPESV…AVLMDVSRRE (171 aa)). Residues 1439–1466 (PMVRSAGPGEAQETEELARRQRRHPELS) form a disordered region. Intrachain disulfides connect cysteine 1544–cysteine 1576 and cysteine 1564–cysteine 1578. Positions 1544–1594 (CVFWNHSILVSGTGGWSARGCEVVFRNESHVSCQCNHMTSFAVLMDVSRRE) are GPS. Residues asparagine 1548 and asparagine 1570 are each glycosylated (N-linked (GlcNAc...) asparagine). The chain crosses the membrane as a helical span at residues 1606–1626 (YVALGVTLAALMITFLFLTLL). Topologically, residues 1627 to 1641 (RALRSNQHGIRRNLT) are cytoplasmic. Residues 1642-1662 (AALGLAQLVFLLGINQADLPF) traverse the membrane as a helical segment. Position 1663 (alanine 1663) is a topological domain, extracellular. A helical membrane pass occupies residues 1664–1684 (CTVIAILLHFLYLCTFSWALL). Residues 1685–1705 (EALHLYRALTEVRDVNASPMR) lie on the Cytoplasmic side of the membrane. The helical transmembrane segment at 1706-1726 (FYYMLGWGVPAFITGLAVGLD) threads the bilayer. Residues 1727-1744 (PEGYGNPDFCWLSIYDTL) are Extracellular-facing. The helical transmembrane segment at 1745–1765 (IWSFAGPVAFAVSMSVFLYIL) threads the bilayer. At 1766–1789 (SARASCAAQRQGFEKKGPVSGLRS) the chain is on the cytoplasmic side. A helical transmembrane segment spans residues 1790–1810 (SFTVLLLLSATWLLALLSVNS). The Extracellular portion of the chain corresponds to 1811 to 1816 (DTLLFH). The helical transmembrane segment at 1817-1837 (YLFAACNCVQGPFIFLSYVVL) threads the bilayer. The Cytoplasmic segment spans residues 1838 to 2144 (SKEVRKALKF…SEFLFFNFLH (307 aa)). Residues 1914–2109 (TLNPGQVPPG…PPRPPPRQSL (196 aa)) are disordered. Residues 1943-1955 (TDSDSDLSLEDDQ) are compositionally biased toward acidic residues. Polar residues predominate over residues 2016–2025 (GTTTKENSGS). Basic and acidic residues predominate over residues 2028–2040 (LEERPRENGDALT). Positions 2082–2095 (GTGSSRGSTASEGS) are enriched in polar residues.

It belongs to the G-protein coupled receptor 2 family. LN-TM7 subfamily. In terms of assembly, heterodimer of 2 chains generated by proteolytic processing; the large extracellular N-terminal fragment and the membrane-bound C-terminal fragment predominantly remain associated and non-covalently linked. In terms of processing, the iron and 2-oxoglutarate dependent 3-hydroxylation of aspartate and asparagine is (R) stereospecific within EGF domains. Post-translationally, autoproteolytically processed at the GPS region of the GAIN-B domain; this cleavage modulates receptor activity. In terms of tissue distribution, expressed in the brain. High expression in cerebellum and olfactory bulb. Weaker expression in cerebral cortex, hippocampus and brain stem.

The protein localises to the cell membrane. Functionally, receptor that may have an important role in cell/cell signaling during nervous system formation. The polypeptide is Cadherin EGF LAG seven-pass G-type receptor 2 (Rattus norvegicus (Rat)).